A 236-amino-acid chain; its full sequence is Probable sulfate/thiosulfate import ATP-binding protein CysA (236 aa).

The ABC transporter domain maps to 3-233; sequence ILIENISKRF…PTNTFVTNFL (231 aa). Position 35–42 (35–42) interacts with ATP; that stretch reads GPSGSGKS.

The protein belongs to the ABC transporter superfamily. Sulfate/tungstate importer (TC 3.A.1.6) family.

It is found in the plastid. The protein localises to the chloroplast. The catalysed reaction is sulfate(out) + ATP + H2O = sulfate(in) + ADP + phosphate + H(+). It carries out the reaction thiosulfate(out) + ATP + H2O = thiosulfate(in) + ADP + phosphate + H(+). Its function is as follows. Part of the ABC transporter complex involved in sulfate/thiosulfate import. Responsible for energy coupling to the transport system. The protein is Probable sulfate/thiosulfate import ATP-binding protein CysA of Chlorella vulgaris (Green alga).